The primary structure comprises 169 residues: Allophycocyanin subunit beta-18 (169 aa).

Position 72 is an N4-methylasparagine (N72). C82 lines the (2R,3E)-phycocyanobilin pocket.

It belongs to the phycobiliprotein family. In terms of assembly, heterodimer of an alpha and a beta chain. Contains one covalently linked bilin chromophore.

It localises to the plastid. The protein localises to the chloroplast thylakoid membrane. Functionally, light-harvesting photosynthetic bile pigment-protein from the phycobiliprotein complex. Allophycocyanin has a maximum absorption at approximately 650 nanometers. This Pyropia yezoensis (Susabi-nori) protein is Allophycocyanin subunit beta-18 (apcF).